The sequence spans 177 residues: Large ribosomal subunit protein uL6 (177 aa).

It belongs to the universal ribosomal protein uL6 family. As to quaternary structure, part of the 50S ribosomal subunit.

Its function is as follows. This protein binds to the 23S rRNA, and is important in its secondary structure. It is located near the subunit interface in the base of the L7/L12 stalk, and near the tRNA binding site of the peptidyltransferase center. The polypeptide is Large ribosomal subunit protein uL6 (Nitrobacter winogradskyi (strain ATCC 25391 / DSM 10237 / CIP 104748 / NCIMB 11846 / Nb-255)).